The chain runs to 72 residues: Cytochrome b-c1 complex subunit 8 (72 aa).

Residues 2-41 (GKQPVKLKAVVYAISPFQQKIMPGLWKDLPGKIHHKVSEN) lie on the Mitochondrial matrix side of the membrane. A helical transmembrane segment spans residues 42–59 (WISATLLLGPLVGTYSYV). At 60–72 (QHFLEKEKLEHRY) the chain is on the mitochondrial intermembrane side.

The protein belongs to the UQCRQ/QCR8 family. Component of the ubiquinol-cytochrome c oxidoreductase (cytochrome b-c1 complex, complex III, CIII), a multisubunit enzyme composed of 3 respiratory subunits cytochrome b, cytochrome c1 and Rieske protein, 2 core protein subunits, and additional low-molecular weight protein subunits. The complex exists as an obligatory dimer and forms supercomplexes (SCs) in the inner mitochondrial membrane with cytochrome c oxidase (complex IV, CIV).

It localises to the mitochondrion inner membrane. Its function is as follows. Component of the ubiquinol-cytochrome c oxidoreductase, a multisubunit transmembrane complex that is part of the mitochondrial electron transport chain which drives oxidative phosphorylation. The respiratory chain contains 3 multisubunit complexes succinate dehydrogenase (complex II, CII), ubiquinol-cytochrome c oxidoreductase (cytochrome b-c1 complex, complex III, CIII) and cytochrome c oxidase (complex IV, CIV), that cooperate to transfer electrons derived from NADH and succinate to molecular oxygen, creating an electrochemical gradient over the inner membrane that drives transmembrane transport and the ATP synthase. The cytochrome b-c1 complex catalyzes electron transfer from ubiquinol to cytochrome c, linking this redox reaction to translocation of protons across the mitochondrial inner membrane, with protons being carried across the membrane as hydrogens on the quinol. In the process called Q cycle, 2 protons are consumed from the matrix, 4 protons are released into the intermembrane space and 2 electrons are passed to cytochrome c. This Solanum tuberosum (Potato) protein is Cytochrome b-c1 complex subunit 8.